A 252-amino-acid chain; its full sequence is Chaplin-A (252 aa).

Residues 1–20 (MVAAAAATGILSLCGSPALA) form the signal peptide. The Chaplin 1 domain maps to 31 to 71 (SPGAVSGNALQVPVDVPVNACGNTVDVIAALNPAFGNECEN). 2 disordered regions span residues 71–121 (NASD…GNNA) and 150–224 (CEND…GSEG). The segment covering 86 to 108 (EDASSSSSSSTSASSSGSHADGA) has biased composition (low complexity). The region spanning 112–152 (SPGVGSGNNAQVPVDVPVNLCGNTVDVIAALNPVFGNKCEN) is the Chaplin 2 domain. The span at 153–165 (DAEEPPGYGEEEP) shows a compositional bias: acidic residues. Positions 210-224 (QTEQPPALAETGSEG) are enriched in low complexity. The short motif at 217-221 (LAETG) is the LPXTG sorting signal element. 2 consecutive propeptides (removed by sortase) follow at residues 219–252 (ETGS…LSGR) and 221–252 (GSEG…LSGR). Threonine 220 is modified (pentaglycyl murein peptidoglycan amidated threonine).

It belongs to the chaplin family. Long chaplin subfamily.

It localises to the secreted. It is found in the cell wall. In terms of biological role, one of 8 partially redundant surface-active proteins required for efficient formation of aerial mycelium; the short chaplins assemble into a hydrophobic, amyloidal fibrillar surface layer that envelopes and protects aerial hyphae and spores, presumably anchored to the long chaplins. Chaplins have an overlapping function with the surface-active SapB peptide; chaplins are essential on minimal medium while on rich medium both chaplins and SapB are required for efficient aerial hyphae formation. A minimal chaplin strain capable of forming aerial mycelium/hyphae on minimal medium contains ChpC, ChpE and ChpH. The strain also has restored rodlet formation on the hyphae surface. A second minimal chaplin strain with ChpA, ChpD and ChpE makes slightly less robust hyphae. The long chaplins (ChpA, ChpB, ChpC) are not absolutely necessary for short chaplin localization or rodlet formation, but probably play a role in initiating aerial hyphae development. Chaplins are also involved in cell attachment to a hydrophobic surface. This is Chaplin-A from Streptomyces coelicolor (strain ATCC BAA-471 / A3(2) / M145).